The sequence spans 206 residues: Thymidylate kinase (206 aa).

14–21 (GGEGIGKS) is an ATP binding site.

The protein belongs to the thymidylate kinase family.

The enzyme catalyses dTMP + ATP = dTDP + ADP. Its function is as follows. Phosphorylation of dTMP to form dTDP in both de novo and salvage pathways of dTTP synthesis. In Rickettsia bellii (strain RML369-C), this protein is Thymidylate kinase.